A 225-amino-acid chain; its full sequence is Cyclin-dependent kinase inhibitor 3 (225 aa).

Disordered regions lie at residues 47 to 94 and 130 to 169; these read AAAA…QRRR and ERKS…PLSP. Over residues 55 to 67 the composition is skewed to basic residues; it reads CRRRHRRGGRRGC. Low complexity predominate over residues 71–82; sequence GAGSARACGARS. Over residues 143-153 the composition is skewed to basic and acidic residues; it reads VAAEHAGEHKH.

Belongs to the CDI family. ICK/KRP subfamily.

In Oryza sativa subsp. japonica (Rice), this protein is Cyclin-dependent kinase inhibitor 3 (KRP3).